The sequence spans 1650 residues: Phosphatidylinositol 3,4,5-trisphosphate-dependent Rac exchanger 1 protein (1650 aa).

A compositionally biased stretch (gly residues) spans 1-19 (MEAPGSGGGDGGGDPGGDG). The interval 1-33 (MEAPGSGGGDGGGDPGGDGAHPDARGPVSGPCA) is disordered. Residues 44-235 (LRLCVLNEIL…KTVCSNINET (192 aa)) form the DH domain. A PH domain is found at 266 to 387 (ELLLQGNLLK…WLDALIRERE (122 aa)). Serine 314 carries the phosphoserine modification. DEP domains lie at 416–491 (MSKK…RFRY) and 518–592 (SLYA…RFHA). In terms of domain architecture, PDZ spans 620–698 (RLLIPPQEDD…SRRPLRLLVA (79 aa)). Residues 793–813 (ARASQGAPDEDPQEDDQPDSA) are disordered. Positions 800-810 (PDEDPQEDDQP) are enriched in acidic residues. Residue serine 991 is modified to Phosphoserine. Disordered regions lie at residues 1022 to 1047 (SPAV…GAPS) and 1099 to 1129 (PTSA…EVDR). Over residues 1030-1047 (QGQGLNDSSYGSASGAPS) the composition is skewed to polar residues. Residues 1109 to 1122 (PSLVEETSSSPPVS) are compositionally biased toward low complexity. A phosphoserine mark is found at serine 1186 and serine 1191.

In terms of assembly, interacts preferentially with RAC2. Interacts with RAC1. Interacts with AUTS2.

Its subcellular location is the cytoplasm. The protein resides in the cytosol. The protein localises to the cell membrane. Its function is as follows. Functions as a RAC guanine nucleotide exchange factor (GEF), which activates the Rac proteins by exchanging bound GDP for free GTP. Its activity is synergistically activated by phosphatidylinositol 3,4,5-trisphosphate and the beta gamma subunits of heterotrimeric G protein. May function downstream of heterotrimeric G proteins in neutrophils. In Mus musculus (Mouse), this protein is Phosphatidylinositol 3,4,5-trisphosphate-dependent Rac exchanger 1 protein (Prex1).